Here is a 512-residue protein sequence, read N- to C-terminus: Ribose import ATP-binding protein RbsA 2 (512 aa).

2 consecutive ABC transporter domains span residues 22 to 258 and 263 to 512; these read LEMR…VGRD and FPKV…TGNA. 54–61 provides a ligand contact to ATP; the sequence is GENGAGKS.

It belongs to the ABC transporter superfamily. Ribose importer (TC 3.A.1.2.1) family. The complex is composed of an ATP-binding protein (RbsA), two transmembrane proteins (RbsC) and a solute-binding protein (RbsB).

The protein resides in the cell inner membrane. It carries out the reaction D-ribose(out) + ATP + H2O = D-ribose(in) + ADP + phosphate + H(+). Functionally, part of the ABC transporter complex RbsABC involved in ribose import. Responsible for energy coupling to the transport system. This is Ribose import ATP-binding protein RbsA 2 from Rhizobium johnstonii (strain DSM 114642 / LMG 32736 / 3841) (Rhizobium leguminosarum bv. viciae).